Reading from the N-terminus, the 346-residue chain is MTTVLAIETSCDETAVAIVNNRQVLSSIIASQISVHQQYGGVVPEVASRAHLETINGAIAQAMDQAQLGWDKIDAIAATCAPGLVGALLVGLTAAKTLAILHNKPFLGVHHLEGHIYATYLSEPTLDPPFLSLLVSGGHTSLIYVKECGRYESLGETRDDAAGEAFDKVARLLKLGYPGGPVIDKLAQTGNPQAFALPEGKVSLPGGGYHPYDGSFSGLKTAVLRLVQQLEKDGDSLPLEDIAASFQATVAKALTKRAIACALDYGLDTIAVGGGVAANSGLRQHLQAATAANNLRVLFPPLKFCTDNAAMIACAAVDHLSRGHTSPITLGVESRLSLSQVMKLYQ.

Positions 111 and 115 each coordinate Fe cation. Substrate-binding positions include 134-138, aspartate 167, glycine 180, aspartate 184, and asparagine 279; that span reads LVSGG. A Fe cation-binding site is contributed by aspartate 307.

It belongs to the KAE1 / TsaD family. The cofactor is Fe(2+).

The protein resides in the cytoplasm. It catalyses the reaction L-threonylcarbamoyladenylate + adenosine(37) in tRNA = N(6)-L-threonylcarbamoyladenosine(37) in tRNA + AMP + H(+). In terms of biological role, required for the formation of a threonylcarbamoyl group on adenosine at position 37 (t(6)A37) in tRNAs that read codons beginning with adenine. Is involved in the transfer of the threonylcarbamoyl moiety of threonylcarbamoyl-AMP (TC-AMP) to the N6 group of A37, together with TsaE and TsaB. TsaD likely plays a direct catalytic role in this reaction. The polypeptide is tRNA N6-adenosine threonylcarbamoyltransferase (Nostoc sp. (strain PCC 7120 / SAG 25.82 / UTEX 2576)).